We begin with the raw amino-acid sequence, 491 residues long: Aspartyl/glutamyl-tRNA(Asn/Gln) amidotransferase subunit B (491 aa).

Belongs to the GatB/GatE family. GatB subfamily. In terms of assembly, heterotrimer of A, B and C subunits.

The enzyme catalyses L-glutamyl-tRNA(Gln) + L-glutamine + ATP + H2O = L-glutaminyl-tRNA(Gln) + L-glutamate + ADP + phosphate + H(+). It catalyses the reaction L-aspartyl-tRNA(Asn) + L-glutamine + ATP + H2O = L-asparaginyl-tRNA(Asn) + L-glutamate + ADP + phosphate + 2 H(+). Allows the formation of correctly charged Asn-tRNA(Asn) or Gln-tRNA(Gln) through the transamidation of misacylated Asp-tRNA(Asn) or Glu-tRNA(Gln) in organisms which lack either or both of asparaginyl-tRNA or glutaminyl-tRNA synthetases. The reaction takes place in the presence of glutamine and ATP through an activated phospho-Asp-tRNA(Asn) or phospho-Glu-tRNA(Gln). This Burkholderia ambifaria (strain ATCC BAA-244 / DSM 16087 / CCUG 44356 / LMG 19182 / AMMD) (Burkholderia cepacia (strain AMMD)) protein is Aspartyl/glutamyl-tRNA(Asn/Gln) amidotransferase subunit B.